The sequence spans 173 residues: Ribosome maturation factor RimM (173 aa).

Positions 95–169 (DPDEFYDHQL…VIEIDPPEGL (75 aa)) constitute a PRC barrel domain.

This sequence belongs to the RimM family. As to quaternary structure, binds ribosomal protein uS19.

The protein localises to the cytoplasm. In terms of biological role, an accessory protein needed during the final step in the assembly of 30S ribosomal subunit, possibly for assembly of the head region. Essential for efficient processing of 16S rRNA. May be needed both before and after RbfA during the maturation of 16S rRNA. It has affinity for free ribosomal 30S subunits but not for 70S ribosomes. The sequence is that of Ribosome maturation factor RimM from Mycobacteroides abscessus (strain ATCC 19977 / DSM 44196 / CCUG 20993 / CIP 104536 / JCM 13569 / NCTC 13031 / TMC 1543 / L948) (Mycobacterium abscessus).